We begin with the raw amino-acid sequence, 192 residues long: Lipid A acyltransferase PagP (192 aa).

The N-terminal stretch at 1–24 (MWLRFCAPALMAWYWVFFPSTSQA) is a signal peptide. Residues His-63, Asp-106, and Ser-107 contribute to the active site.

It belongs to the lipid A palmitoyltransferase family. In terms of assembly, homodimer.

The protein resides in the cell outer membrane. The catalysed reaction is a lipid A + a 1,2-diacyl-sn-glycero-3-phosphocholine = a hepta-acyl lipid A + a 2-acyl-sn-glycero-3-phosphocholine. It carries out the reaction a lipid IVA + a 1,2-diacyl-sn-glycero-3-phosphocholine = a lipid IVB + a 2-acyl-sn-glycero-3-phosphocholine. It catalyses the reaction a lipid IIA + a 1,2-diacyl-sn-glycero-3-phosphocholine = a lipid IIB + a 2-acyl-sn-glycero-3-phosphocholine. Functionally, transfers a fatty acid residue from the sn-1 position of a phospholipid to the N-linked hydroxyfatty acid chain on the proximal unit of lipid A or its precursors. This chain is Lipid A acyltransferase PagP, found in Musicola paradisiaca (strain Ech703) (Dickeya paradisiaca).